We begin with the raw amino-acid sequence, 277 residues long: Ribosomal RNA small subunit methyltransferase A (277 aa).

S-adenosyl-L-methionine contacts are provided by Asn-27, Leu-29, Gly-54, Glu-75, Asp-95, and Asn-118.

This sequence belongs to the class I-like SAM-binding methyltransferase superfamily. rRNA adenine N(6)-methyltransferase family. RsmA subfamily.

The protein resides in the cytoplasm. It catalyses the reaction adenosine(1518)/adenosine(1519) in 16S rRNA + 4 S-adenosyl-L-methionine = N(6)-dimethyladenosine(1518)/N(6)-dimethyladenosine(1519) in 16S rRNA + 4 S-adenosyl-L-homocysteine + 4 H(+). Specifically dimethylates two adjacent adenosines (A1518 and A1519) in the loop of a conserved hairpin near the 3'-end of 16S rRNA in the 30S particle. May play a critical role in biogenesis of 30S subunits. The protein is Ribosomal RNA small subunit methyltransferase A of Chlamydia trachomatis serovar L2 (strain ATCC VR-902B / DSM 19102 / 434/Bu).